We begin with the raw amino-acid sequence, 573 residues long: DNA ligase (573 aa).

E248 is a binding site for ATP. K250 acts as the N6-AMP-lysine intermediate in catalysis. R255, R270, E299, F340, R432, and K438 together coordinate ATP.

This sequence belongs to the ATP-dependent DNA ligase family. Mg(2+) serves as cofactor.

The catalysed reaction is ATP + (deoxyribonucleotide)n-3'-hydroxyl + 5'-phospho-(deoxyribonucleotide)m = (deoxyribonucleotide)n+m + AMP + diphosphate.. Functionally, DNA ligase that seals nicks in double-stranded DNA during DNA replication, DNA recombination and DNA repair. The polypeptide is DNA ligase (Methanocaldococcus jannaschii (strain ATCC 43067 / DSM 2661 / JAL-1 / JCM 10045 / NBRC 100440) (Methanococcus jannaschii)).